A 239-amino-acid chain; its full sequence is Orotidine 5'-phosphate decarboxylase (239 aa).

Substrate is bound by residues Asp-11, Lys-33, 60-69, Thr-117, Arg-178, Gln-187, Gly-207, and Arg-208; that span reads DLKFHDIPTT. Lys-62 serves as the catalytic Proton donor.

The protein belongs to the OMP decarboxylase family. Type 1 subfamily. As to quaternary structure, homodimer.

The enzyme catalyses orotidine 5'-phosphate + H(+) = UMP + CO2. The protein operates within pyrimidine metabolism; UMP biosynthesis via de novo pathway; UMP from orotate: step 2/2. In terms of biological role, catalyzes the decarboxylation of orotidine 5'-monophosphate (OMP) to uridine 5'-monophosphate (UMP). The protein is Orotidine 5'-phosphate decarboxylase of Nitrosospira multiformis (strain ATCC 25196 / NCIMB 11849 / C 71).